An 88-amino-acid polypeptide reads, in one-letter code: Small ribosomal subunit protein bS20 (88 aa).

It belongs to the bacterial ribosomal protein bS20 family.

Its function is as follows. Binds directly to 16S ribosomal RNA. The chain is Small ribosomal subunit protein bS20 from Brucella abortus (strain S19).